A 374-amino-acid polypeptide reads, in one-letter code: N5-carboxyaminoimidazole ribonucleotide synthase (374 aa).

Residues Arg-108, Lys-148, 153–159, 183–186, Glu-191, His-214, and 266–267 contribute to the ATP site; these read GYDGKGQ, EKYL, and NE. The ATP-grasp domain maps to 112 to 296; it reads KETLKSAGTK…QFDTHILAVT (185 aa).

It belongs to the PurK/PurT family. As to quaternary structure, homodimer.

The enzyme catalyses 5-amino-1-(5-phospho-beta-D-ribosyl)imidazole + hydrogencarbonate + ATP = 5-carboxyamino-1-(5-phospho-D-ribosyl)imidazole + ADP + phosphate + 2 H(+). The protein operates within purine metabolism; IMP biosynthesis via de novo pathway; 5-amino-1-(5-phospho-D-ribosyl)imidazole-4-carboxylate from 5-amino-1-(5-phospho-D-ribosyl)imidazole (N5-CAIR route): step 1/2. Catalyzes the ATP-dependent conversion of 5-aminoimidazole ribonucleotide (AIR) and HCO(3)(-) to N5-carboxyaminoimidazole ribonucleotide (N5-CAIR). In Staphylococcus aureus (strain COL), this protein is N5-carboxyaminoimidazole ribonucleotide synthase.